A 340-amino-acid polypeptide reads, in one-letter code: uncharacterized protein (340 aa).

The next 2 helical transmembrane spans lie at 162–182 (PLVP…VLAG) and 239–259 (FWIS…IVVP).

The protein resides in the cell membrane. This is an uncharacterized protein from Mycobacterium bovis (strain ATCC BAA-935 / AF2122/97).